The following is a 692-amino-acid chain: Formate hydrogenlyase transcriptional activator FhlA (692 aa).

Residues 202–344 form the GAF domain; it reads DMDELVSEVA…QIAERVAIAV (143 aa). Residues 381-610 enclose the Sigma-54 factor interaction domain; that stretch reads IIGRSEAMYS…LENVIERAVL (230 aa). ATP contacts are provided by residues 409 to 416 and 472 to 481; these read GETGTGKE and ADKSSLFLDE. Positions 663–682 form a DNA-binding region, H-T-H motif; that stretch reads PKGAAQRLGLKRTTLLSRMK.

Its function is as follows. Required for induction of expression of the formate dehydrogenase H and hydrogenase-3 structural genes. Also activates expression of hyf operon (encodes the silent hydrogenase-4 gene cluster). This is Formate hydrogenlyase transcriptional activator FhlA (fhlA) from Escherichia coli (strain K12).